The primary structure comprises 599 residues: Proline--tRNA ligase (599 aa).

The protein belongs to the class-II aminoacyl-tRNA synthetase family. ProS type 1 subfamily. Homodimer.

Its subcellular location is the cytoplasm. The enzyme catalyses tRNA(Pro) + L-proline + ATP = L-prolyl-tRNA(Pro) + AMP + diphosphate. Functionally, catalyzes the attachment of proline to tRNA(Pro) in a two-step reaction: proline is first activated by ATP to form Pro-AMP and then transferred to the acceptor end of tRNA(Pro). As ProRS can inadvertently accommodate and process non-cognate amino acids such as alanine and cysteine, to avoid such errors it has two additional distinct editing activities against alanine. One activity is designated as 'pretransfer' editing and involves the tRNA(Pro)-independent hydrolysis of activated Ala-AMP. The other activity is designated 'posttransfer' editing and involves deacylation of mischarged Ala-tRNA(Pro). The misacylated Cys-tRNA(Pro) is not edited by ProRS. This is Proline--tRNA ligase from Prochlorococcus marinus (strain MIT 9313).